We begin with the raw amino-acid sequence, 24 residues long: Brevinin-1Pe (24 aa).

The cysteines at positions 18 and 24 are disulfide-linked.

As to expression, expressed by the skin glands.

Its subcellular location is the secreted. Antibacterial activity against Gram-positive bacterium S.aureus and Gram-negative bacterium E.coli. Has activity against C.albicans. The chain is Brevinin-1Pe from Lithobates pipiens (Northern leopard frog).